Consider the following 457-residue polypeptide: tRNA-2-methylthio-N(6)-dimethylallyladenosine synthase (457 aa).

Residues 3 to 120 (KKVYVKTFGC…LPQMIDARRA (118 aa)) form the MTTase N-terminal domain. [4Fe-4S] cluster-binding residues include Cys12, Cys49, Cys83, Cys157, Cys161, and Cys164. Positions 143-377 (RVEGPSAFVS…QATIEENVAR (235 aa)) constitute a Radical SAM core domain. Positions 380–447 (QSMVGKVERI…PHSLRGELVL (68 aa)) constitute a TRAM domain.

It belongs to the methylthiotransferase family. MiaB subfamily. In terms of assembly, monomer. [4Fe-4S] cluster serves as cofactor.

The protein resides in the cytoplasm. It catalyses the reaction N(6)-dimethylallyladenosine(37) in tRNA + (sulfur carrier)-SH + AH2 + 2 S-adenosyl-L-methionine = 2-methylsulfanyl-N(6)-dimethylallyladenosine(37) in tRNA + (sulfur carrier)-H + 5'-deoxyadenosine + L-methionine + A + S-adenosyl-L-homocysteine + 2 H(+). In terms of biological role, catalyzes the methylthiolation of N6-(dimethylallyl)adenosine (i(6)A), leading to the formation of 2-methylthio-N6-(dimethylallyl)adenosine (ms(2)i(6)A) at position 37 in tRNAs that read codons beginning with uridine. The sequence is that of tRNA-2-methylthio-N(6)-dimethylallyladenosine synthase from Burkholderia cenocepacia (strain HI2424).